A 427-amino-acid chain; its full sequence is FAD-dependent monooxygenase OpS4 (427 aa).

The signal sequence occupies residues Met1–Ala22. An FAD-binding site is contributed by Glu37. Asn54 carries an N-linked (GlcNAc...) asparagine glycan. FAD contacts are provided by Arg112, Asp306, and Ala319.

Belongs to the paxM FAD-dependent monooxygenase family. FAD is required as a cofactor.

It participates in secondary metabolite biosynthesis. Functionally, FAD-dependent monooxygenase; part of the gene cluster that mediates the biosynthesis of the bibenzoquinone oosporein, a metabolite required for fungal virulence that acts by evading host immunity to facilitate fungal multiplication in insects. The non-reducing polyketide synthase OpS1 produces orsellinic acid by condensing acetyl-CoA with 3 malonyl-CoA units. Orsellinic acid is then hydroxylated to benzenetriol by the hydroxylase OpS4. The intermediate is oxidized either nonenzymatically to 5,5'-dideoxy-oosporein or enzymatically to benzenetetrol by the oxidoreductase OpS7. The latter is further dimerized to oosporein by the catalase OpS5. OpS6 probably functions en route for protecting cells against oxidative stress by scavenging any leaked free radical form of benzenetetrol by activating the thiol group of glutathione. The polypeptide is FAD-dependent monooxygenase OpS4 (Beauveria bassiana (strain ARSEF 2860) (White muscardine disease fungus)).